The following is a 714-amino-acid chain: Polyribonucleotide nucleotidyltransferase (714 aa).

Positions 489 and 495 each coordinate Mg(2+). Residues 556–615 (PKIDTIKIDVDKIKVVIGKGGETIDKIIAETGVKIDIDEEGNVSIYSSDQDAINRAKEII) form the KH domain. Residues 625–693 (GEVYHAKVVR…DKGRIDASMK (69 aa)) form the S1 motif domain. A disordered region spans residues 691 to 714 (SMKALVPRPPKPEKSEAKKEGKHD). Over residues 700–714 (PKPEKSEAKKEGKHD) the composition is skewed to basic and acidic residues.

Belongs to the polyribonucleotide nucleotidyltransferase family. The cofactor is Mg(2+).

The protein localises to the cytoplasm. The enzyme catalyses RNA(n+1) + phosphate = RNA(n) + a ribonucleoside 5'-diphosphate. Involved in mRNA degradation. Catalyzes the phosphorolysis of single-stranded polyribonucleotides processively in the 3'- to 5'-direction. The sequence is that of Polyribonucleotide nucleotidyltransferase from Streptococcus equi subsp. equi (strain 4047).